The following is a 307-amino-acid chain: NAD kinase 2 (307 aa).

Catalysis depends on Asp-77, which acts as the Proton acceptor. Residues 77 to 78, 151 to 152, Asp-181, 192 to 197, and Asn-251 each bind NAD(+); these read DG, NE, and TAYALS.

The protein belongs to the NAD kinase family. It depends on a divalent metal cation as a cofactor.

The protein localises to the cytoplasm. The catalysed reaction is NAD(+) + ATP = ADP + NADP(+) + H(+). In terms of biological role, involved in the regulation of the intracellular balance of NAD and NADP, and is a key enzyme in the biosynthesis of NADP. Catalyzes specifically the phosphorylation on 2'-hydroxyl of the adenosine moiety of NAD to yield NADP. The sequence is that of NAD kinase 2 from Thermosynechococcus vestitus (strain NIES-2133 / IAM M-273 / BP-1).